Consider the following 424-residue polypeptide: Serine--tRNA ligase (424 aa).

229–231 (TAE) provides a ligand contact to L-serine. ATP-binding positions include 260–262 (RKE) and valine 276. Residue glutamate 283 coordinates L-serine. 347-350 (ELVS) is an ATP binding site. Threonine 383 is an L-serine binding site.

The protein belongs to the class-II aminoacyl-tRNA synthetase family. Type-1 seryl-tRNA synthetase subfamily. As to quaternary structure, homodimer. The tRNA molecule binds across the dimer.

It is found in the cytoplasm. The catalysed reaction is tRNA(Ser) + L-serine + ATP = L-seryl-tRNA(Ser) + AMP + diphosphate + H(+). It catalyses the reaction tRNA(Sec) + L-serine + ATP = L-seryl-tRNA(Sec) + AMP + diphosphate + H(+). It functions in the pathway aminoacyl-tRNA biosynthesis; selenocysteinyl-tRNA(Sec) biosynthesis; L-seryl-tRNA(Sec) from L-serine and tRNA(Sec): step 1/1. Catalyzes the attachment of serine to tRNA(Ser). Is also able to aminoacylate tRNA(Sec) with serine, to form the misacylated tRNA L-seryl-tRNA(Sec), which will be further converted into selenocysteinyl-tRNA(Sec). The sequence is that of Serine--tRNA ligase from Methanosphaera stadtmanae (strain ATCC 43021 / DSM 3091 / JCM 11832 / MCB-3).